A 560-amino-acid chain; its full sequence is MSRKLFASILIGALLGIGAPPSAHAGADDVVDSSKSFVMENFSSYHGTKPGYVDSIQKGIQKPKSGTQGNYDDDWKGFYSTDNKYDAAGYSVDNENPLSGKAGGVVKVTYPGLTKVLALKVDNAETIKKELGLSLTEPLMEQVGTEEFIKRFGDGASRVVLSLPFAEGSSSVEYINNWEQAKALSVELEINFETRGKRGQDAMYEYMAQACAGNRVRRSVGSSLSCINLDWDVIRDKTKTKIESLKEHGPIKNKMSESPNKTVSEEKAKQYLEEFHQTALEHPELSELKTVTGTNPVFAGANYAAWAVNVAQVIDSETADNLEKTTAALSILPGIGSVMGIADGAVHHNTEEIVAQSIALSSLMVAQAIPLVGELVDIGFAAYNFVESIINLFQVVHNSYNRPAYSPGHKTQPFLHDGYAVSWNTVEDSIIRTGFQGESGHDIKITAENTPLPIAGVLLPTIPGKLDVNKSKTHISVNGRKIRMRCRAIDGDVTFCRPKSPVYVGNGVHANLHVAFHRSSSEKIHSNEISSDSIGVLGYQKTVDHTKVNSKLSLFFEIKS.

The first 25 residues, 1–25 (MSRKLFASILIGALLGIGAPPSAHA), serve as a signal peptide directing secretion. NAD(+)-binding residues include H46 and Y90. The active site involves E173. 2 cysteine pairs are disulfide-bonded: C211–C226 and C486–C496.

As to quaternary structure, homodimer.

It catalyses the reaction diphthamide-[translation elongation factor 2] + NAD(+) = N-(ADP-D-ribosyl)diphthamide-[translation elongation factor 2] + nicotinamide + H(+). In terms of biological role, diphtheria toxin, produced by a phage infecting Corynebacterium diphtheriae, is a proenzyme that, after activation, catalyzes the covalent attachment of the ADP ribose moiety of NAD to elongation factor 2. Fragment A is responsible for enzymatic ADP-ribosylation of elongation factor 2, while fragment B is responsible for binding of toxin to cell receptors and entry of fragment A. This chain is Diphtheria toxin, found in Corynephage omega.